A 505-amino-acid chain; its full sequence is Maturase K (505 aa).

Belongs to the intron maturase 2 family. MatK subfamily.

It localises to the plastid. The protein localises to the chloroplast. In terms of biological role, usually encoded in the trnK tRNA gene intron. Probably assists in splicing its own and other chloroplast group II introns. The polypeptide is Maturase K (Phaulothamnus spinescens (Snake-eyes)).